The primary structure comprises 127 residues: Putative membrane protein insertion efficiency factor (127 aa).

Positions 71-106 are disordered; that stretch reads DPPPPPRLHRAAAARMPRQRDADPRDTTRCSSTGAE. Over residues 88–98 the composition is skewed to basic and acidic residues; it reads RQRDADPRDTT.

The protein belongs to the UPF0161 family.

Its subcellular location is the cell inner membrane. Its function is as follows. Could be involved in insertion of integral membrane proteins into the membrane. The protein is Putative membrane protein insertion efficiency factor of Sorangium cellulosum (strain So ce56) (Polyangium cellulosum (strain So ce56)).